Consider the following 217-residue polypeptide: Probable transaldolase (217 aa).

Lys-83 (schiff-base intermediate with substrate) is an active-site residue.

Belongs to the transaldolase family. Type 3B subfamily.

It localises to the cytoplasm. The catalysed reaction is D-sedoheptulose 7-phosphate + D-glyceraldehyde 3-phosphate = D-erythrose 4-phosphate + beta-D-fructose 6-phosphate. The protein operates within carbohydrate degradation; pentose phosphate pathway; D-glyceraldehyde 3-phosphate and beta-D-fructose 6-phosphate from D-ribose 5-phosphate and D-xylulose 5-phosphate (non-oxidative stage): step 2/3. Transaldolase is important for the balance of metabolites in the pentose-phosphate pathway. The protein is Probable transaldolase of Jannaschia sp. (strain CCS1).